Here is a 1192-residue protein sequence, read N- to C-terminus: MPLKFCMERGFQSHPVRGCLVGASRFLSCIKFLVSINPESKSRATNREVLNELIKLHGKTSLGGKLPAYDGRKSLYTAGSLPFESEEFVVKLIDPEKKDKERAEREYKITIRIAGRTDFYHLQQFLLGRQRDMPQETIQFGHRGDIGEGLECWRGYYQSLRPTQMGLSLNIDISATSFFKPVTVIQFVEEFLNIRDTSRPLSDRDRVKIKKALRGVRIETNHQEDQIRRYKITGITPIPMSQLIFPVDDNGTRKTVVQYFWDRYNYRLKYASWPCLQSGSDSRPVYLPMEVCKIVEGQRYSKKLNNKQVTNILRATCQRPQQREQRIHEMVLHNKYTDDRFAQEFGIKVCNDLVSVPARVLPPPMLKYHDSGREKTCAPSVGQWNMINKKMINGGTVDNWTCLSFSRMRPEEVQRFCGDLIQMCNATGMSFNPRPVVDVRSSNPNNIENALRDVHSRTSELLAREGKGGLQLLIVILLEVSGSYGKIKRVCENDLGIVSQCCLPRHASRPNKQYLENVALKINVKKSQQSSLVLMSHTPPGEDSASSIAAVVASMDWPEITKYRGLVSAQSHRQEIIEDLFSVGKDPVKVVNGGMIREFLIAFRKKTGRRPERIIFYRDGVSEGQFSRVLLHEMDAIRKACASLEEGYLPPVTFVVVQKRHHTRLFPEVHGRRDMTDKSGNILPGTVKDRQICHPTEFYFYLCSHAGIQGTSRPTHYHVLYDENHFTADELQTLTNNLCYIYARCTHAVSVVPPAYYSHLAASHAHCCIKGHSSGSGSTPGNEHDIVKNSAPTLQILVKVLDFQIVPLTMKLKSSAEDIVALALSKHRVSLHDVYVYHGRRVIAKSLTLESLKADRDSTFLIMPRMRGGCNDTIGGFKCIPLEQHIRSLGDSLFEIIWIPPDLRVSGFCSYLIILGKPARKIICQLLKLLEIIHAANRFASRFTIADLVFLPDLGCIAFKKGVKIRWNLRREEYKLNMGDVASIISCWFRFNRRKLEALEAGIHELRPGQGDSPMFVDILVKDLRSPTHETGLSANYRGFYKNCSALRSCSAHMNLFTSLDIRKDFMVGSADWGNFVKALGDIKLPGWYRTAMRSPEMRKVLFFEFNDPHTGELRGKRYRALSVFSWLEFARIFIKHMKKGLCTDKQATALLCVIFSNIVPVVEKKLTYSYRPPAKEKSNESFTVEEILDPS.

The 114-residue stretch at 183 to 296 (TVIQFVEEFL…LPMEVCKIVE (114 aa)) folds into the PAZ domain. Positions 472–770 (LLIVILLEVS…AASHAHCCIK (299 aa)) constitute a Piwi domain.

Belongs to the argonaute family. Ago subfamily.

Its function is as follows. Probably involved in the RNA silencing pathway. May bind to short RNAs such as microRNAs (miRNAs) or short interfering RNAs (siRNAs), and represses the translation of mRNAs which are complementary to them. The sequence is that of Protein argonaute 13 (AGO13) from Oryza sativa subsp. japonica (Rice).